The following is a 310-amino-acid chain: Mitogen-activated protein kinase kinase 9 (310 aa).

Positions 47–306 (LEKLNVLGCG…APQLLAHPFL (260 aa)) constitute a Protein kinase domain. ATP-binding positions include 53–61 (LGCGNGGIV) and Lys-76. Catalysis depends on Asp-167, which acts as the Proton acceptor. Ser-195 and Ser-201 each carry phosphoserine. Thr-205 carries the phosphothreonine modification.

It belongs to the protein kinase superfamily. STE Ser/Thr protein kinase family. MAP kinase kinase subfamily. Post-translationally, phosphorylation at Ser-195 and Ser-201 by MAP kinase kinase kinases positively regulates kinase activity. Autophosphorylated.

It is found in the cytoplasm. The protein resides in the nucleus. The enzyme catalyses L-seryl-[protein] + ATP = O-phospho-L-seryl-[protein] + ADP + H(+). It catalyses the reaction L-threonyl-[protein] + ATP = O-phospho-L-threonyl-[protein] + ADP + H(+). It carries out the reaction L-tyrosyl-[protein] + ATP = O-phospho-L-tyrosyl-[protein] + ADP + H(+). MKK9-MPK3/MPK6 module phosphorylates and activates EIN3, leading to the promotion of EIN3-mediated transcription in ethylene signaling. Autophosphorylates and also phosphorylates MPK3 and MPK6. Plays an important role in ethylene and camalexin biosynthesis and in salt stress response. MKK9-MPK6 module positively regulates leaf senescence. This chain is Mitogen-activated protein kinase kinase 9 (MKK9), found in Arabidopsis thaliana (Mouse-ear cress).